Consider the following 388-residue polypeptide: Succinate--CoA ligase [ADP-forming] subunit beta (388 aa).

The ATP-grasp domain occupies 9–244 (KQLFAQYGLP…PAQNDAREAH (236 aa)). ATP-binding positions include K46, 53–55 (GRG), E99, T102, and E107. Mg(2+)-binding residues include N199 and D213. Substrate contacts are provided by residues N264 and 321–323 (GIV).

This sequence belongs to the succinate/malate CoA ligase beta subunit family. As to quaternary structure, heterotetramer of two alpha and two beta subunits. It depends on Mg(2+) as a cofactor.

The enzyme catalyses succinate + ATP + CoA = succinyl-CoA + ADP + phosphate. The catalysed reaction is GTP + succinate + CoA = succinyl-CoA + GDP + phosphate. Its pathway is carbohydrate metabolism; tricarboxylic acid cycle; succinate from succinyl-CoA (ligase route): step 1/1. In terms of biological role, succinyl-CoA synthetase functions in the citric acid cycle (TCA), coupling the hydrolysis of succinyl-CoA to the synthesis of either ATP or GTP and thus represents the only step of substrate-level phosphorylation in the TCA. The beta subunit provides nucleotide specificity of the enzyme and binds the substrate succinate, while the binding sites for coenzyme A and phosphate are found in the alpha subunit. The chain is Succinate--CoA ligase [ADP-forming] subunit beta from Edwardsiella ictaluri (strain 93-146).